Here is a 199-residue protein sequence, read N- to C-terminus: Lysine exporter LysE (199 aa).

5 helical membrane passes run Val-6–Val-26, Leu-42–Ile-62, Ala-68–Ala-88, Trp-144–Gly-164, and Trp-178–Val-198.

It belongs to the LysE/ArgO transporter (TC 2.A.75) family.

Its subcellular location is the cell inner membrane. In terms of biological role, catalyzes the efflux of L-lysine. This Mycobacterium bovis (strain ATCC BAA-935 / AF2122/97) protein is Lysine exporter LysE.